The following is a 260-amino-acid chain: Tropinone reductase homolog At1g07450 (260 aa).

Residue Leu14 to His38 participates in NADP(+) binding. A substrate-binding site is contributed by Ser147. The active-site Proton acceptor is the Tyr159.

Belongs to the short-chain dehydrogenases/reductases (SDR) family. SDR65C subfamily.

The polypeptide is Tropinone reductase homolog At1g07450 (Arabidopsis thaliana (Mouse-ear cress)).